The primary structure comprises 495 residues: Lysine--tRNA ligase (495 aa).

2 residues coordinate Mg(2+): E406 and E413.

It belongs to the class-II aminoacyl-tRNA synthetase family. Homodimer. Mg(2+) is required as a cofactor.

The protein localises to the cytoplasm. It catalyses the reaction tRNA(Lys) + L-lysine + ATP = L-lysyl-tRNA(Lys) + AMP + diphosphate. In Leuconostoc mesenteroides subsp. mesenteroides (strain ATCC 8293 / DSM 20343 / BCRC 11652 / CCM 1803 / JCM 6124 / NCDO 523 / NBRC 100496 / NCIMB 8023 / NCTC 12954 / NRRL B-1118 / 37Y), this protein is Lysine--tRNA ligase.